A 367-amino-acid chain; its full sequence is Glutamate 5-kinase (367 aa).

K10 serves as a coordination point for ATP. The substrate site is built by S50, D137, and N149. Residues 169-170 (TD) and 211-217 (TGGMSTK) each bind ATP. Residues 275-353 (AGIITIDAGA…QDIEQVLGYE (79 aa)) enclose the PUA domain.

This sequence belongs to the glutamate 5-kinase family.

The protein resides in the cytoplasm. It catalyses the reaction L-glutamate + ATP = L-glutamyl 5-phosphate + ADP. The protein operates within amino-acid biosynthesis; L-proline biosynthesis; L-glutamate 5-semialdehyde from L-glutamate: step 1/2. Functionally, catalyzes the transfer of a phosphate group to glutamate to form L-glutamate 5-phosphate. This chain is Glutamate 5-kinase, found in Pasteurella multocida (strain Pm70).